The following is a 201-amino-acid chain: Recombination protein RecR (201 aa).

A C4-type zinc finger spans residues cysteine 60–cysteine 75. In terms of domain architecture, Toprim spans threonine 83–proline 178.

This sequence belongs to the RecR family.

In terms of biological role, may play a role in DNA repair. It seems to be involved in an RecBC-independent recombinational process of DNA repair. It may act with RecF and RecO. The polypeptide is Recombination protein RecR (Methylorubrum populi (strain ATCC BAA-705 / NCIMB 13946 / BJ001) (Methylobacterium populi)).